We begin with the raw amino-acid sequence, 397 residues long: Tryptophan synthase beta chain (397 aa).

Lysine 91 bears the N6-(pyridoxal phosphate)lysine mark.

Belongs to the TrpB family. In terms of assembly, tetramer of two alpha and two beta chains. It depends on pyridoxal 5'-phosphate as a cofactor.

The enzyme catalyses (1S,2R)-1-C-(indol-3-yl)glycerol 3-phosphate + L-serine = D-glyceraldehyde 3-phosphate + L-tryptophan + H2O. It functions in the pathway amino-acid biosynthesis; L-tryptophan biosynthesis; L-tryptophan from chorismate: step 5/5. Its function is as follows. The beta subunit is responsible for the synthesis of L-tryptophan from indole and L-serine. The chain is Tryptophan synthase beta chain from Bacillus cereus (strain ZK / E33L).